Consider the following 279-residue polypeptide: uncharacterized protein (279 aa).

An N-terminal signal peptide occupies residues 1–21 (MKIIRTLFLLLIAVYGSSVVA).

This sequence to E.coli YfcO.

This is an uncharacterized protein from Salmonella typhimurium (strain LT2 / SGSC1412 / ATCC 700720).